We begin with the raw amino-acid sequence, 669 residues long: Cytokinesis protein 2 (669 aa).

The 261-residue stretch at 1-261 (MSYSYEACFW…HLNSFTAADE (261 aa)) folds into the F-BAR domain. The stretch at 134 to 200 (KKGCEVLQKK…LKQEYKASQK (67 aa)) forms a coiled coil. 2 positions are modified to phosphoserine: Ser337 and Ser366. The interval 372–518 (VQLQSNVDDS…DYNTRRDTST (147 aa)) is disordered. 2 stretches are compositionally biased toward basic and acidic residues: residues 381–391 (SVLRQKPDKPR) and 397–413 (EQLK…EKGL). Ser421 bears the Phosphoserine mark. 2 stretches are compositionally biased toward low complexity: residues 421–431 (SLSSPSESSSS) and 445–455 (MESMTTSVSSM). Residues 599–667 (PVIEYAKAMY…PYNFIQLLHQ (69 aa)) form the SH3 domain.

As to quaternary structure, interacts with INN1.

Its subcellular location is the cytoplasm. It is found in the cytoskeleton. It localises to the bud neck. Functionally, throughout most of the cell cycle it forms a double ring that coincides with the septins. After the onset of mitosis, forms a ring-like structure which colocalizes with the medial actin ring. Mediates cytoskeletal rearrangements required for cytokinesis. In conjunction with the medial actin ring exhibits contraction-like action. This Saccharomyces cerevisiae (strain ATCC 204508 / S288c) (Baker's yeast) protein is Cytokinesis protein 2 (HOF1).